Here is a 421-residue protein sequence, read N- to C-terminus: Tyrosine--tRNA ligase 1 (421 aa).

L-tyrosine is bound at residue Tyr-35. The 'HIGH' region motif lies at 40–49; that stretch reads PTADSLHIGH. L-tyrosine is bound by residues Tyr-170 and Gln-174. The 'KMSKS' region motif lies at 231–235; it reads KFGKT. Lys-234 is a binding site for ATP. Residues 354–420 enclose the S4 RNA-binding domain; that stretch reads LPLVEILVQS…GKKKYFLLTY (67 aa).

Belongs to the class-I aminoacyl-tRNA synthetase family. TyrS type 1 subfamily. As to quaternary structure, homodimer.

It localises to the cytoplasm. The enzyme catalyses tRNA(Tyr) + L-tyrosine + ATP = L-tyrosyl-tRNA(Tyr) + AMP + diphosphate + H(+). Functionally, catalyzes the attachment of tyrosine to tRNA(Tyr) in a two-step reaction: tyrosine is first activated by ATP to form Tyr-AMP and then transferred to the acceptor end of tRNA(Tyr). This chain is Tyrosine--tRNA ligase 1, found in Bacillus licheniformis (strain ATCC 14580 / DSM 13 / JCM 2505 / CCUG 7422 / NBRC 12200 / NCIMB 9375 / NCTC 10341 / NRRL NRS-1264 / Gibson 46).